Reading from the N-terminus, the 419-residue chain is Tryptophan synthase beta chain (419 aa).

An N6-(pyridoxal phosphate)lysine modification is found at Lys-86. Residues 394–403 show a composition bias toward basic and acidic residues; sequence VEQQKVEQQK. The disordered stretch occupies residues 394 to 419; it reads VEQQKVEQQKADNQNTEKNNQESGNE. Positions 404–419 are enriched in polar residues; the sequence is ADNQNTEKNNQESGNE.

The protein belongs to the TrpB family. In terms of assembly, tetramer of two alpha and two beta chains. Pyridoxal 5'-phosphate is required as a cofactor.

The enzyme catalyses (1S,2R)-1-C-(indol-3-yl)glycerol 3-phosphate + L-serine = D-glyceraldehyde 3-phosphate + L-tryptophan + H2O. The protein operates within amino-acid biosynthesis; L-tryptophan biosynthesis; L-tryptophan from chorismate: step 5/5. The beta subunit is responsible for the synthesis of L-tryptophan from indole and L-serine. This chain is Tryptophan synthase beta chain, found in Shewanella halifaxensis (strain HAW-EB4).